The sequence spans 252 residues: Triosephosphate isomerase (252 aa).

Residue 10-12 (NWK) coordinates substrate. H96 serves as the catalytic Electrophile. E168 acts as the Proton acceptor in catalysis. Residues G174, S214, and 235-236 (GG) each bind substrate.

The protein belongs to the triosephosphate isomerase family. As to quaternary structure, homodimer.

The protein resides in the cytoplasm. The catalysed reaction is D-glyceraldehyde 3-phosphate = dihydroxyacetone phosphate. It participates in carbohydrate biosynthesis; gluconeogenesis. It functions in the pathway carbohydrate degradation; glycolysis; D-glyceraldehyde 3-phosphate from glycerone phosphate: step 1/1. Involved in the gluconeogenesis. Catalyzes stereospecifically the conversion of dihydroxyacetone phosphate (DHAP) to D-glyceraldehyde-3-phosphate (G3P). This Streptococcus pyogenes serotype M5 (strain Manfredo) protein is Triosephosphate isomerase.